Reading from the N-terminus, the 688-residue chain is Amino-acid acetyltransferase, mitochondrial (688 aa).

The N-terminal 45 residues, 1 to 45 (MSSRALTWPRTAKSSLLKQQTSSFVGQPKLGTPNCRSFSSTADRP), are a transit peptide targeting the mitochondrion. 2 disordered regions span residues 1 to 59 (MSSR…SKSY) and 96 to 119 (LKAQ…TVTQ). 3 stretches are compositionally biased toward polar residues: residues 12 to 25 (AKSS…SSFV), 34 to 57 (NCRS…SSSK), and 106 to 119 (TEPT…TVTQ). The N-acetyltransferase domain occupies 509–678 (NRPRLSLDDP…YEQVCRSIQP (170 aa)).

Belongs to the acetyltransferase family.

It is found in the mitochondrion. It catalyses the reaction L-glutamate + acetyl-CoA = N-acetyl-L-glutamate + CoA + H(+). It participates in amino-acid biosynthesis; L-arginine biosynthesis; N(2)-acetyl-L-ornithine from L-glutamate: step 1/4. In terms of biological role, N-acetylglutamate synthase involved in arginine biosynthesis. The chain is Amino-acid acetyltransferase, mitochondrial (arg2) from Aspergillus flavus (strain ATCC 200026 / FGSC A1120 / IAM 13836 / NRRL 3357 / JCM 12722 / SRRC 167).